Consider the following 140-residue polypeptide: Holo-[acyl-carrier-protein] synthase (140 aa).

Residues Asp8 and Glu62 each contribute to the Mg(2+) site.

It belongs to the P-Pant transferase superfamily. AcpS family. The cofactor is Mg(2+).

It localises to the cytoplasm. It catalyses the reaction apo-[ACP] + CoA = holo-[ACP] + adenosine 3',5'-bisphosphate + H(+). In terms of biological role, transfers the 4'-phosphopantetheine moiety from coenzyme A to a Ser of acyl-carrier-protein. The polypeptide is Holo-[acyl-carrier-protein] synthase (Cupriavidus necator (strain ATCC 17699 / DSM 428 / KCTC 22496 / NCIMB 10442 / H16 / Stanier 337) (Ralstonia eutropha)).